The primary structure comprises 778 residues: MSKTPRTQPGRLSSRFWRLLGASTDKNLNYSSAEVTAAAAYHKEAADLGDEQLRKACGLLNLNDLADSRDVPQFLAIVREASERSTGLRPFDVQLLGALRMLAGDVIEMATGEGKTLAGAIAAAGYALAGRHVHVVTINDYLARRDAEWMGPLLEAIGLTVGWITAESTREDRKAAYGCDVTYASVNEIGFDVLRDQLVTDVDDLVSPHPDVALIDEADSVLVDEALVPLVLAGATHRETPRLEIIKLVGELSAESDYDTDSDSRNVHLTDVGARKVEKALGGIDLYSEEHVGTTLTEVNVALHAHVLLQRDVHYIVRDDAVHLVNASRGRIAQLQRWPDGLQAAVEAKEGIETTETGEVLDTITVQALINRYATVCGMTGTALAAGEQLRQFYKLGVSPIPPNTPNIRDDASDRVYITAAAKNDAIVAHLAEVHETGQPVLVGTRNVAESEELHERLLRHGVPAVVLNAKNDAEEARFIAEAGKFGAVTVSTQMAGRGTDIRLGGSDESDHDRVVELGGLHVVGTGRHHTERLDNQLRGRAGRQGDPGSSVFFSSWEDDVIAANLDRNKLPMQTDEDGRIISLKTTGLLDHAQRVAEGRLLDVHANTWRYNQLIAQQRAIIVDRRNALLSSATAREELAELAPKRYEELAQALPKEEAEERLETICRLIMLYHLDRGWADHLAYLADIRESIHLRALGRQSPLDEFHRLAVNAFALLAADAIEAAQQTFETANILDGAPGLDLSKLARPTSTWTYMVNDAPLSDDTLSPLSLPGVFR.

Residues Gln94, 112–116, and Asp501 contribute to the ATP site; that span reads GEGKT.

It belongs to the SecA family. As to quaternary structure, monomer and homodimer. Part of the essential Sec protein translocation apparatus which comprises SecA, SecYEG and auxiliary proteins SecDF. Other proteins may also be involved.

It is found in the cell membrane. Its subcellular location is the cytoplasm. It catalyses the reaction ATP + H2O + cellular proteinSide 1 = ADP + phosphate + cellular proteinSide 2.. Functionally, part of the Sec protein translocase complex. Interacts with the SecYEG preprotein conducting channel. Has a central role in coupling the hydrolysis of ATP to the transfer of proteins into and across the cell membrane, serving as an ATP-driven molecular motor driving the stepwise translocation of polypeptide chains across the membrane. The sequence is that of Protein translocase subunit SecA 2 from Mycobacterium leprae (strain TN).